Here is a 103-residue protein sequence, read N- to C-terminus: Small ribosomal subunit protein uS10 (103 aa).

Belongs to the universal ribosomal protein uS10 family. As to quaternary structure, part of the 30S ribosomal subunit.

Its function is as follows. Involved in the binding of tRNA to the ribosomes. The protein is Small ribosomal subunit protein uS10 of Shewanella pealeana (strain ATCC 700345 / ANG-SQ1).